Consider the following 439-residue polypeptide: RNA polymerase II-associated protein RBA50 (439 aa).

Disordered regions lie at residues 1–35 (MDLL…GFPE) and 49–79 (LREK…SEAK). Residues 15–30 (SVESNDNGTLSTNNCG) are compositionally biased toward polar residues.

The protein belongs to the RPAP1 family.

It is found in the cytoplasm. Functionally, forms an interface between the RNA polymerase II enzyme and chaperone/scaffolding proteins, suggesting that it is required to connect RNA polymerase II to regulators of protein complex formation. This is RNA polymerase II-associated protein RBA50 (RBA50) from Saccharomyces cerevisiae (strain ATCC 204508 / S288c) (Baker's yeast).